A 213-amino-acid chain; its full sequence is Octanoyltransferase (213 aa).

The 176-residue stretch at 36-211 (TNTPDEIWLV…KFCQQLGFKL (176 aa)) folds into the BPL/LPL catalytic domain. Residues 75-82 (RGGQVTYH), 142-144 (SLG), and 155-157 (GLA) contribute to the substrate site. Cys-173 serves as the catalytic Acyl-thioester intermediate.

The protein belongs to the LipB family.

It is found in the cytoplasm. It carries out the reaction octanoyl-[ACP] + L-lysyl-[protein] = N(6)-octanoyl-L-lysyl-[protein] + holo-[ACP] + H(+). The protein operates within protein modification; protein lipoylation via endogenous pathway; protein N(6)-(lipoyl)lysine from octanoyl-[acyl-carrier-protein]: step 1/2. Its function is as follows. Catalyzes the transfer of endogenously produced octanoic acid from octanoyl-acyl-carrier-protein onto the lipoyl domains of lipoate-dependent enzymes. Lipoyl-ACP can also act as a substrate although octanoyl-ACP is likely to be the physiological substrate. This chain is Octanoyltransferase, found in Photorhabdus laumondii subsp. laumondii (strain DSM 15139 / CIP 105565 / TT01) (Photorhabdus luminescens subsp. laumondii).